The chain runs to 259 residues: MLMVISPAKTLDYRTPPVTARHTLPRYLDHAAELMVRLRELTPQAIAELMSLSDKLAGLNAARYAEWTPDFTPANAKQALLAFKGDVYTGLDAEDFDEADFDFAQAHLRMLSGLYGVLRPLDLMQPYRLEMGTKLANARGKDLYAFWGERISLWLNEALAEQGDDILLNLASNEYFSAVRRPLLRGRVIDTEFRDLKNDQYKIVSFYAKQARGRMARYVIKERLRDPEGLKDFDERGYRFSISHSTPERLVFLRDRPMD.

This sequence belongs to the UPF0246 family.

In Azotobacter vinelandii (strain DJ / ATCC BAA-1303), this protein is UPF0246 protein Avin_11220.